Here is a 715-residue protein sequence, read N- to C-terminus: Phosphatidylinositol 4-phosphate 5-kinase 6 (715 aa).

Residues 1–13 (MSVAHADDADDYS) show a composition bias toward basic and acidic residues. Residues 1–21 (MSVAHADDADDYSRPTGESYH) are disordered. MORN repeat units follow at residues 32–54 (YTGQ…DGCM), 55–77 (YVGD…SGAT), 78–100 (YEGD…SGDL), 101–123 (YRGS…NGDC), 124–146 (YDGE…NENH), 147–169 (YIGQ…NGNR), 170–192 (YDGS…DGSF), and 193–214 (YVGV…STSS). The segment at 253-306 (GASEQSSSGNRTKNSERPRRRSVDGRVSNGEMELRSNGSGYLQVDDNAESTRSS) is disordered. The segment covering 255-264 (SEQSSSGNRT) has biased composition (polar residues). Basic and acidic residues predominate over residues 265-276 (KNSERPRRRSVD). Residues 321 to 711 (TISKGHKNYE…RFRDFIFRVF (391 aa)) form the PIPK domain. The segment at 671–692 (YDISKKLEHAYKSMQYDPTSIS) is activation loop.

The catalysed reaction is a 1,2-diacyl-sn-glycero-3-phospho-(1D-myo-inositol 4-phosphate) + ATP = a 1,2-diacyl-sn-glycero-3-phospho-(1D-myo-inositol-4,5-bisphosphate) + ADP + H(+). In Arabidopsis thaliana (Mouse-ear cress), this protein is Phosphatidylinositol 4-phosphate 5-kinase 6 (PIP5K6).